The following is a 625-amino-acid chain: Complex I assembly factor ACAD9, mitochondrial (625 aa).

The transit peptide at 1-41 (MSGYVLFSRGATAAAAAARASRVLRVFTERRRTLHTSLQSC) directs the protein to the mitochondrion. K45 carries the N6-acetyllysine modification. K96 carries the post-translational modification N6-succinyllysine. E430 serves as the catalytic Proton acceptor. T482 carries the phosphothreonine modification. K525 bears the N6-acetyllysine; alternate mark. At K525 the chain carries N6-succinyllysine; alternate.

The protein belongs to the acyl-CoA dehydrogenase family. In terms of assembly, homodimer. Interacts with NDUFAF1 and ECSIT. Part of the mitochondrial complex I assembly/MCIA complex that comprises at least the core subunits TMEM126B, NDUFAF1, ECSIT and ACAD9 and complement subunits such as COA1 and TMEM186. Interacts with TMEM70 and TMEM242. FAD serves as cofactor.

It is found in the mitochondrion inner membrane. The catalysed reaction is eicosanoyl-CoA + oxidized [electron-transfer flavoprotein] + H(+) = (2E)-eicosenoyl-CoA + reduced [electron-transfer flavoprotein]. It catalyses the reaction octadecanoyl-CoA + oxidized [electron-transfer flavoprotein] + H(+) = (2E)-octadecenoyl-CoA + reduced [electron-transfer flavoprotein]. It carries out the reaction oxidized [electron-transfer flavoprotein] + hexadecanoyl-CoA + H(+) = (2E)-hexadecenoyl-CoA + reduced [electron-transfer flavoprotein]. The enzyme catalyses decanoyl-CoA + oxidized [electron-transfer flavoprotein] + H(+) = (2E)-decenoyl-CoA + reduced [electron-transfer flavoprotein]. The catalysed reaction is nonanoyl-CoA + oxidized [electron-transfer flavoprotein] + H(+) = (2E)-nonenoyl-CoA + reduced [electron-transfer flavoprotein]. It catalyses the reaction pentadecanoyl-CoA + oxidized [electron-transfer flavoprotein] + H(+) = (2E)-pentadecenoyl-CoA + reduced [electron-transfer flavoprotein]. It carries out the reaction undecanoyl-CoA + oxidized [electron-transfer flavoprotein] + H(+) = trans-2-undecenoyl-CoA + reduced [electron-transfer flavoprotein]. The enzyme catalyses (9Z)-hexadecenoyl-CoA + oxidized [electron-transfer flavoprotein] + H(+) = (2E,9Z)-hexadecadienoyl-CoA + reduced [electron-transfer flavoprotein]. The catalysed reaction is heptadecanoyl-CoA + oxidized [electron-transfer flavoprotein] + H(+) = trans-2-heptadecenoyl-CoA + reduced [electron-transfer flavoprotein]. It catalyses the reaction (9E)-octadecenoyl-CoA + oxidized [electron-transfer flavoprotein] + H(+) = (2E,9E)-octadecadienoyl-CoA + reduced [electron-transfer flavoprotein]. It carries out the reaction oxidized [electron-transfer flavoprotein] + (9Z)-octadecenoyl-CoA + H(+) = (2E,9Z)-octadecadienoyl-CoA + reduced [electron-transfer flavoprotein]. The enzyme catalyses (9Z,12Z)-octadecadienoyl-CoA + oxidized [electron-transfer flavoprotein] + H(+) = (2E,9Z,12Z)-octadecatrienoyl-CoA + reduced [electron-transfer flavoprotein]. The catalysed reaction is (4Z,7Z,10Z,13Z,16Z,19Z)-docosahexaenoyl-CoA + oxidized [electron-transfer flavoprotein] + H(+) = (2E,4Z,7Z,10Z,13Z,16Z,19Z)-docosaheptaenoyl-CoA + reduced [electron-transfer flavoprotein]. It catalyses the reaction tetradecanoyl-CoA + oxidized [electron-transfer flavoprotein] + H(+) = (2E)-tetradecenoyl-CoA + reduced [electron-transfer flavoprotein]. Its function is as follows. As part of the MCIA complex, primarily participates in the assembly of the mitochondrial complex I and therefore plays a role in oxidative phosphorylation. This moonlighting protein also has a dehydrogenase activity toward a broad range of substrates with greater specificity for long-chain unsaturated acyl-CoAs. However, in vivo, it does not seem to play a primary role in fatty acid oxidation. In addition, the function in complex I assembly is independent of the dehydrogenase activity of the protein. This chain is Complex I assembly factor ACAD9, mitochondrial, found in Rattus norvegicus (Rat).